The primary structure comprises 415 residues: Putative competence-damage inducible protein (415 aa).

The protein belongs to the CinA family.

The chain is Putative competence-damage inducible protein from Listeria innocua serovar 6a (strain ATCC BAA-680 / CLIP 11262).